The chain runs to 566 residues: Mucin-21 (566 aa).

The signal sequence occupies residues Met1 to Ser24. An N-linked (GlcNAc...) asparagine glycan is attached at Asn25. Residues Asn25 to Thr68 are disordered. Residues Asn25–Glu479 are Extracellular-facing. A run of 28 repeats spans residues Ala31–Thr44, Ala45–Thr59, Ala60–Ile74, Val75–Thr89, Ala90–Ile104, Ala105–Thr119, Ala120–Thr134, Ala135–Thr149, Ala150–Thr164, Ala165–Thr179, Ala180–Thr194, Ala195–Thr209, Ala210–Thr224, Ala225–Thr239, Glu244–Thr254, Ala255–Thr269, Ala270–Thr284, Val285–Thr299, Ala300–Thr314, Ala315–Thr329, Ala330–Thr344, Ala345–Thr359, Ala360–Thr374, Ala375–Thr389, Ala390–Thr404, Ala405–Thr419, Ala420–Thr434, and Ala435–Thr449. The 28 X 15 AA approximate tandem repeats stretch occupies residues Ala31–Ala435. The interval Thr106–His456 is disordered. The chain crosses the membrane as a helical span at residues Ile480–Phe500. At Cys501–Pro566 the chain is on the cytoplasmic side. The interval Gly521 to Pro566 is cytoplasmic tail.

O-glycosylated. In terms of tissue distribution, expressed in lung, large intestine, thymus, and testis. Expressed in normal and malignant bronchial epithelial cells.

The protein resides in the cell membrane. This chain is Mucin-21 (MUC21), found in Homo sapiens (Human).